The chain runs to 172 residues: L-amino acid oxidase (172 aa).

Residue Gly-44–Arg-47 coordinates FAD. Substrate-binding residues include Arg-47 and His-103.

The protein belongs to the flavin monoamine oxidase family. FIG1 subfamily. Heterodimer; non-covalently linked. The cofactor is FAD. N-glycosylated. As to expression, expressed by the venom gland.

It localises to the secreted. It carries out the reaction an L-alpha-amino acid + O2 + H2O = a 2-oxocarboxylate + H2O2 + NH4(+). It catalyses the reaction L-leucine + O2 + H2O = 4-methyl-2-oxopentanoate + H2O2 + NH4(+). The catalysed reaction is L-phenylalanine + O2 + H2O = 3-phenylpyruvate + H2O2 + NH4(+). The enzyme catalyses L-tryptophan + O2 + H2O = indole-3-pyruvate + H2O2 + NH4(+). It carries out the reaction L-methionine + O2 + H2O = 4-methylsulfanyl-2-oxobutanoate + H2O2 + NH4(+). It catalyses the reaction L-isoleucine + O2 + H2O = (S)-3-methyl-2-oxopentanoate + H2O2 + NH4(+). The catalysed reaction is L-arginine + O2 + H2O = 5-guanidino-2-oxopentanoate + H2O2 + NH4(+). The enzyme catalyses L-tyrosine + O2 + H2O = 3-(4-hydroxyphenyl)pyruvate + H2O2 + NH4(+). Its activity is regulated as follows. Activity is increased by Mn(2+) ions. Inhibited by Zn(2+), Ni(2+), Co(2+), Cu(2+) and Al(3+). No significant activity change by Na(+), K(+), Ca(2+), Mg(2+) and Ba(2+) ions. Both isoform are completely inhibited by L-Cys and reduced glutathione. O-phenanthroline, beta-mercaptoethanol and PMSF completely inhibit the enzymatic activity of LAAOII, but have no activity on LAAOI. Iodoacetic acid inhibits the enzymatic activity of LAAOII by 46% but has no effect on the LAAOI activity. In terms of biological role, catalyzes an oxidative deamination of predominantly hydrophobic and aromatic L-amino acids, thus producing hydrogen peroxide that may contribute to the diverse toxic effects of this enzyme. Shows high specificity for L-Arg, L-Met, L-Phe, L-Leu, L-Tyr, L-Ile and L-Trp, low specificity for L-Val, L-Ala, L-Asn, L-Gln, and no specificity for L-Pro, L-Ser, L-Thr, L-Cys, L-Gly and L-Asp. Exhibits diverse biological activities, such as hemorrhage, hemolysis, edema, antibacterial and antiparasitic activities, as well as regulation of platelet aggregation. Its effect on platelets is controversial, since it either induces aggregation or inhibits agonist-induced aggregation. These different effects are probably due to different experimental conditions. This Cerastes cerastes (Horned desert viper) protein is L-amino acid oxidase.